The sequence spans 372 residues: Aminomethyltransferase (372 aa).

The protein belongs to the GcvT family. The glycine cleavage system is composed of four proteins: P, T, L and H.

It catalyses the reaction N(6)-[(R)-S(8)-aminomethyldihydrolipoyl]-L-lysyl-[protein] + (6S)-5,6,7,8-tetrahydrofolate = N(6)-[(R)-dihydrolipoyl]-L-lysyl-[protein] + (6R)-5,10-methylene-5,6,7,8-tetrahydrofolate + NH4(+). Its function is as follows. The glycine cleavage system catalyzes the degradation of glycine. In Burkholderia multivorans (strain ATCC 17616 / 249), this protein is Aminomethyltransferase.